The sequence spans 183 residues: Ribosome-recycling factor (183 aa).

Belongs to the RRF family.

Its subcellular location is the cytoplasm. Its function is as follows. Responsible for the release of ribosomes from messenger RNA at the termination of protein biosynthesis. May increase the efficiency of translation by recycling ribosomes from one round of translation to another. This is Ribosome-recycling factor from Mycoplasma mobile (strain ATCC 43663 / 163K / NCTC 11711) (Mesomycoplasma mobile).